The following is a 341-amino-acid chain: Paired box protein Pax-9 (341 aa).

Positions 4–130 (AFGEVNQLGG…SSISRILRNK (127 aa)) form a DNA-binding region, paired. The PAI subdomain stretch occupies residues 7-63 (EVNQLGGVFVNGRPLPNAIRLRIVELAQLGIRPCDISRQLRVSHGCVSKILARYNET). Residues 82 to 130 (TVVKHIRTYKQRDPGIFAWEIRDRLLADGVCDKYNVPSVSSISRILRNK) form an RED subdomain region. Residues 168–189 (AAAAKVPTPPGVPAIPGSVAMP) form an interaction with KDM5B region.

As to quaternary structure, interacts with KDM5B.

It is found in the nucleus. In terms of biological role, transcription factor required for normal development of thymus, parathyroid glands, ultimobranchial bodies, teeth, skeletal elements of skull and larynx as well as distal limbs. This is Paired box protein Pax-9 (PAX9) from Callimico goeldii (Goeldi's marmoset).